We begin with the raw amino-acid sequence, 736 residues long: Acyl-coenzyme A oxidase (736 aa).

Belongs to the acyl-CoA oxidase family. Requires FAD as cofactor.

It is found in the peroxisome. It catalyses the reaction a 2,3-saturated acyl-CoA + O2 = a (2E)-enoyl-CoA + H2O2. Its pathway is lipid metabolism; peroxisomal fatty acid beta-oxidation. This chain is Acyl-coenzyme A oxidase (POX1), found in Kluyveromyces lactis (strain ATCC 8585 / CBS 2359 / DSM 70799 / NBRC 1267 / NRRL Y-1140 / WM37) (Yeast).